Consider the following 391-residue polypeptide: Anhydro-N-acetylmuramic acid kinase (391 aa).

ATP is bound at residue 9 to 16; it reads GTSYDAVE.

This sequence belongs to the anhydro-N-acetylmuramic acid kinase family.

It catalyses the reaction 1,6-anhydro-N-acetyl-beta-muramate + ATP + H2O = N-acetyl-D-muramate 6-phosphate + ADP + H(+). It participates in amino-sugar metabolism; 1,6-anhydro-N-acetylmuramate degradation. It functions in the pathway cell wall biogenesis; peptidoglycan recycling. Its function is as follows. Catalyzes the specific phosphorylation of 1,6-anhydro-N-acetylmuramic acid (anhMurNAc) with the simultaneous cleavage of the 1,6-anhydro ring, generating MurNAc-6-P. Is required for the utilization of anhMurNAc either imported from the medium or derived from its own cell wall murein, and thus plays a role in cell wall recycling. This is Anhydro-N-acetylmuramic acid kinase from Streptomyces coelicolor (strain ATCC BAA-471 / A3(2) / M145).